We begin with the raw amino-acid sequence, 1013 residues long: Tolloid-like protein 1 (1013 aa).

An N-terminal signal peptide occupies residues 1 to 30; that stretch reads MGLQALSPRMLLWLVVSGIVFSRVLWVCAG. A propeptide spanning residues 31 to 147 is cleaved from the precursor; the sequence is LDYDYTFDGN…EQSEKNRVPR (117 aa). The disordered stretch occupies residues 124-150; that stretch reads QNNTMKGKAPPKLSEQSEKNRVPRAAT. Residues 148-347 form the Peptidase M12A domain; that stretch reads AATSRTERIW…AQARKLYRCP (200 aa). An N-linked (GlcNAc...) asparagine glycan is attached at asparagine 169. 4 cysteine pairs are disulfide-bonded: cysteine 190-cysteine 346, cysteine 210-cysteine 232, cysteine 212-cysteine 213, and cysteine 349-cysteine 375. Histidine 240 is a Zn(2+) binding site. Glutamate 241 is a catalytic residue. Zn(2+) is bound by residues histidine 244 and histidine 250. CUB domains are found at residues 349–461 and 462–574; these read CGET…YEAI and CGGE…FFKE. N-linked (GlcNAc...) asparagine glycans are attached at residues asparagine 359 and asparagine 390. 15 disulfide bridges follow: cysteine 402–cysteine 424, cysteine 462–cysteine 488, cysteine 515–cysteine 537, cysteine 578–cysteine 590, cysteine 586–cysteine 599, cysteine 601–cysteine 614, cysteine 618–cysteine 644, cysteine 671–cysteine 693, cysteine 734–cysteine 745, cysteine 741–cysteine 754, cysteine 756–cysteine 769, cysteine 774–cysteine 800, cysteine 827–cysteine 849, cysteine 887–cysteine 917, and cysteine 944–cysteine 966. The region spanning 574–615 is the EGF-like 1; calcium-binding domain; the sequence is EEDECAKPDRGGCEQRCLNTLGSYQCACEPGYELGPDRRSCE. Residues 618-730 form the CUB 3 domain; the sequence is CGGLLTKLNG…KGFKAHFFSD (113 aa). A glycan (N-linked (GlcNAc...) asparagine) is linked at asparagine 626. Positions 730-770 constitute an EGF-like 2; calcium-binding domain; it reads DKDECSKDNGGCQHECVNTMGSYTCQCRNGFVLHENKHDCK. CUB domains are found at residues 774-886 and 887-1003; these read CEQK…HSTE and CGGR…YKSI.

It depends on Zn(2+) as a cofactor. Highly expressed in brain and kidney and weakly in lung, skeletal muscle. A perceptible level of expression is observed in heart and testis.

Its subcellular location is the secreted. Protease which processes procollagen C-propeptides, such as chordin, pro-biglycan and pro-lysyl oxidase. Required for the embryonic development, especially heart development. Predominant protease, which in the development, influences dorsal-ventral patterning and skeletogenesis. The sequence is that of Tolloid-like protein 1 (Tll1) from Mus musculus (Mouse).